Here is an 802-residue protein sequence, read N- to C-terminus: Fibroblast growth factor receptor 3 (802 aa).

An Ig-like C2-type 1 domain is found at 27–115; that stretch reads PDYLMVEQPP…ILRNFTIRVT (89 aa). Cysteines 52 and 98 form a disulfide. Asn-74, Asn-87, and Asn-109 each carry an N-linked (GlcNAc...) asparagine glycan. The segment at 116–148 is disordered; it reads DLPSSGDDEDDDDDDDDETEDREPPRWTQPERM. Residues 121-136 are compositionally biased toward acidic residues; it reads GDDEDDDDDDDDETED. A compositionally biased stretch (basic and acidic residues) spans 137–148; sequence REPPRWTQPERM. Ig-like C2-type domains follow at residues 140–233 and 242–342; these read PRWT…YQLD and PILQ…FWLH. A disulfide bridge connects residues Cys-165 and Cys-217. 5 N-linked (GlcNAc...) asparagine glycosylation sites follow: Asn-214, Asn-251, Asn-283, Asn-303, and Asn-315. Residues Cys-264 and Cys-326 are joined by a disulfide bond. Residues 363-383 form a helical membrane-spanning segment; sequence ITVLIVVTSTIVFILLVIIVI. Over 384-802 the chain is Cytoplasmic; it reads THLMKVPSKK…HQQHNGAIPT (419 aa). The region spanning 462–751 is the Protein kinase domain; that stretch reads LTLGKPLGEG…LTVTSTNEYL (290 aa). ATP contacts are provided by residues 468-476 and Lys-498; that span reads LGEGCFGQV. Asp-607 acts as the Proton acceptor in catalysis. Phosphotyrosine; by autocatalysis is present on residues Tyr-637, Tyr-638, Tyr-714, and Tyr-750.

The protein belongs to the protein kinase superfamily. Tyr protein kinase family. Fibroblast growth factor receptor subfamily. Monomer. Homodimer after ligand binding. Autophosphorylated. Binding of FGF family members together with heparan sulfate proteoglycan or heparin promotes receptor dimerization and autophosphorylation on tyrosine residues. Autophosphorylation occurs in trans between the two FGFR molecules present in the dimer.

It localises to the cell membrane. The catalysed reaction is L-tyrosyl-[protein] + ATP = O-phospho-L-tyrosyl-[protein] + ADP + H(+). Present in an inactive conformation in the absence of bound ligand. Ligand binding leads to dimerization and activation by autophosphorylation on tyrosine residues. In terms of biological role, tyrosine-protein kinase that acts as a cell-surface receptor for fibroblast growth factors and plays an essential role in the regulation of cell proliferation, differentiation and apoptosis. Plays an essential role in the regulation of chondrocyte differentiation, proliferation and apoptosis, and is required for normal skeleton development. Regulates both osteogenesis and postnatal bone mineralization by osteoblasts. Promotes apoptosis in chondrocytes, but can also promote cancer cell proliferation. Phosphorylates PLCG1, CBL and FRS2. Ligand binding leads to the activation of several signaling cascades. Activation of PLCG1 leads to the production of the cellular signaling molecules diacylglycerol and inositol 1,4,5-trisphosphate. Phosphorylation of FRS2 triggers recruitment of GRB2, GAB1, PIK3R1 and SOS1, and mediates activation of RAS, MAPK1/ERK2, MAPK3/ERK1 and the MAP kinase signaling pathway, as well as of the AKT1 signaling pathway. The protein is Fibroblast growth factor receptor 3 (fgfr3) of Xenopus laevis (African clawed frog).